The sequence spans 252 residues: MPSAPAAPAAPAAPDAAASVAPNPPAALPVTVRWLGETPYDACFDAMRAFTDARTPDTDDEIWVVEHPPVYTLGQAGNPAHLLVADSGVPLVKVDRGGQITYHGPGQIVAYLLVDLRRRKLMVRTLVTRIEEAVIETLAAYNLASARKAGAPGIYVESGPHRGAKIAALGLKIRNGCSYHGLSVNVKMDLRPFLAINPCGYAGLETIDMASLGATADWHEVAQTLVRRLIAHLDGATAAAALPQQALEQSND.

Residues 1 to 21 are compositionally biased toward low complexity; it reads MPSAPAAPAAPAAPDAAASVA. Positions 1-22 are disordered; that stretch reads MPSAPAAPAAPAAPDAAASVAP. The 182-residue stretch at 56–237 folds into the BPL/LPL catalytic domain; the sequence is PDTDDEIWVV…RLIAHLDGAT (182 aa). Residues 96-103, 168-170, and 181-183 contribute to the substrate site; these read RGGQITYH, ALG, and GLS. C199 serves as the catalytic Acyl-thioester intermediate.

It belongs to the LipB family.

Its subcellular location is the cytoplasm. The enzyme catalyses octanoyl-[ACP] + L-lysyl-[protein] = N(6)-octanoyl-L-lysyl-[protein] + holo-[ACP] + H(+). Its pathway is protein modification; protein lipoylation via endogenous pathway; protein N(6)-(lipoyl)lysine from octanoyl-[acyl-carrier-protein]: step 1/2. Catalyzes the transfer of endogenously produced octanoic acid from octanoyl-acyl-carrier-protein onto the lipoyl domains of lipoate-dependent enzymes. Lipoyl-ACP can also act as a substrate although octanoyl-ACP is likely to be the physiological substrate. The sequence is that of Octanoyltransferase from Burkholderia pseudomallei (strain 668).